Reading from the N-terminus, the 274-residue chain is HTH-type transcriptional regulator GadX (274 aa).

The region spanning 145 to 242 (TRVCTVINNN…GMTPTEYQER (98 aa)) is the HTH araC/xylS-type domain. 2 consecutive DNA-binding regions (H-T-H motif) follow at residues 162 to 183 (ARIA…REEE) and 209 to 232 (IKRV…RNYY).

As to quaternary structure, homodimer.

Positively regulates the expression of about fifteen genes involved in acid resistance such as gadA, gadB and gadC. Depending on the conditions (growth phase and medium), can repress gadW. This Escherichia coli (strain K12) protein is HTH-type transcriptional regulator GadX (gadX).